We begin with the raw amino-acid sequence, 462 residues long: Chromosomal replication initiator protein DnaA (462 aa).

The domain I, interacts with DnaA modulators stretch occupies residues 1-86 (MSLSLWQQCL…EVGNKPVSQN (86 aa)). Residues 86 to 125 (NDSPPQRVVTHTPVAPAPQNTSVRPSWDNTAVQPELSYRS) are domain II. Residues 126–342 (NVNPKHTFDN…GALNRVIANA (217 aa)) form a domain III, AAA+ region region. Glycine 170, glycine 172, lysine 173, and threonine 174 together coordinate ATP. The tract at residues 343 to 462 (NFTGRAITID…FSNLIRTLSS (120 aa)) is domain IV, binds dsDNA.

This sequence belongs to the DnaA family. As to quaternary structure, oligomerizes as a right-handed, spiral filament on DNA at oriC.

It is found in the cytoplasm. Functionally, plays an essential role in the initiation and regulation of chromosomal replication. ATP-DnaA binds to the origin of replication (oriC) to initiate formation of the DNA replication initiation complex once per cell cycle. Binds the DnaA box (a 9 base pair repeat at the origin) and separates the double-stranded (ds)DNA. Forms a right-handed helical filament on oriC DNA; dsDNA binds to the exterior of the filament while single-stranded (ss)DNA is stabiized in the filament's interior. The ATP-DnaA-oriC complex binds and stabilizes one strand of the AT-rich DNA unwinding element (DUE), permitting loading of DNA polymerase. After initiation quickly degrades to an ADP-DnaA complex that is not apt for DNA replication. Binds acidic phospholipids. The polypeptide is Chromosomal replication initiator protein DnaA (Photorhabdus laumondii subsp. laumondii (strain DSM 15139 / CIP 105565 / TT01) (Photorhabdus luminescens subsp. laumondii)).